The chain runs to 129 residues: Small ribosomal subunit protein uS9 (129 aa).

The protein belongs to the universal ribosomal protein uS9 family.

This is Small ribosomal subunit protein uS9 from Gemmatimonas aurantiaca (strain DSM 14586 / JCM 11422 / NBRC 100505 / T-27).